Here is a 225-residue protein sequence, read N- to C-terminus: uncharacterized protein (225 aa).

Transmembrane regions (helical) follow at residues 1 to 21 (MFIG…AKKV), 31 to 51 (SPLL…NVPY), 56 to 76 (LGGG…AIPL), 88 to 108 (VEII…TALI), 145 to 165 (VTAV…PMVI), and 205 to 225 (VSMI…LSFM).

Belongs to the YohK (E.coli)/YwbG (IPA-22R) (B.subtilis) family.

It localises to the cell membrane. This is an uncharacterized protein from Bacillus subtilis (strain 168).